Here is a 367-residue protein sequence, read N- to C-terminus: Dimethyladenosine transferase 1, mitochondrial (367 aa).

The transit peptide at 1-16 directs the protein to the mitochondrion; sequence MASASRLPPLPALRDF. S-adenosyl-L-methionine contacts are provided by residues 30-33, N31, L33, G58, E80, D106, and N141; that span reads QNYL.

It belongs to the class I-like SAM-binding methyltransferase superfamily. rRNA adenine N(6)-methyltransferase family. KsgA subfamily.

Its subcellular location is the mitochondrion. Functionally, probable S-adenosyl-L-methionine-dependent methyltransferase which specifically dimethylates mitochondrial 12S rRNA at the conserved stem loop. Also required for basal transcription of mitochondrial DNA. Stimulates transcription independently of the methyltransferase activity. This is Dimethyladenosine transferase 1, mitochondrial (tfbm-1) from Caenorhabditis elegans.